The chain runs to 975 residues: Ubiquitin C-terminal hydrolase 15 (975 aa).

Residues cysteine 88, cysteine 91, cysteine 99, cysteine 102, cysteine 108, cysteine 112, histidine 121, and cysteine 125 each contribute to the Zn(2+) site. The segment at 88–125 (CATCHGPAKTRCSRCKSVRYCSGKCQIIHWRQGHKQTC) adopts an MYND-type zinc-finger fold. The disordered stretch occupies residues 301-378 (EGPYASAAES…STKTAVSTNS (78 aa)). Over residues 309 to 322 (ESLQRSNSSGNVTG) the composition is skewed to polar residues. A compositionally biased stretch (basic and acidic residues) spans 354-369 (YDGHEKNPHNKNEQRS). A USP domain is found at 441–747 (RGLFNCGNSC…GAYMLFYMRS (307 aa)). Cysteine 450 acts as the Nucleophile in catalysis. The active-site Proton acceptor is histidine 706. Positions 764 to 783 (PTCSKRHSSKSSKGSKQDLN) are disordered.

The protein belongs to the peptidase C19 family. Highly expressed in young panicles. Expressed in roots, leaf blades, leaf sheaths and stems. Expressed at low levels in brown grains.

Its subcellular location is the cytoplasm. The protein resides in the nucleus. It carries out the reaction Thiol-dependent hydrolysis of ester, thioester, amide, peptide and isopeptide bonds formed by the C-terminal Gly of ubiquitin (a 76-residue protein attached to proteins as an intracellular targeting signal).. In terms of biological role, recognizes and hydrolyzes the peptide bond at the C-terminal Gly of ubiquitin. Involved in the processing of poly-ubiquitin precursors as well as that of ubiquitinated proteins. Involved in the regulation of grain size. Acts as positive regulator of grain width and size by influencing cell proliferation. Functions partially antagonistically with GW2 in the regulation of grain width. Possesses deubiquitinating enzyme activity in vitro. This chain is Ubiquitin C-terminal hydrolase 15, found in Oryza sativa subsp. japonica (Rice).